Consider the following 489-residue polypeptide: Toxin coregulated pilus biosynthesis outer membrane protein C (489 aa).

A signal peptide spans 1–16 (MKKTIISTLVIGLVSG). The N-palmitoyl cysteine moiety is linked to residue C17. C17 is lipidated: S-diacylglycerol cysteine. 4 consecutive transmembrane segments (helical) span residues 174–190 (FSSS…SSGL), 294–308 (AISL…GASY), 402–417 (QLVS…LPTV), and 442–457 (NYIQ…GGGT).

The protein resides in the cell membrane. Functionally, involved in TCP pilus biogenesis. In Vibrio cholerae serotype O1 (strain ATCC 39315 / El Tor Inaba N16961), this protein is Toxin coregulated pilus biosynthesis outer membrane protein C (tcpC).